A 484-amino-acid polypeptide reads, in one-letter code: Fumarate hydratase class II (484 aa).

The tract at residues methionine 1–serine 22 is disordered. Substrate-binding positions include serine 110–threonine 112, histidine 141–aspartate 144, serine 151–asparagine 153, and threonine 199. Histidine 200 acts as the Proton donor/acceptor in catalysis. Residue serine 330 is part of the active site. Residues serine 331 and lysine 336–asparagine 338 each bind substrate.

Belongs to the class-II fumarase/aspartase family. Fumarase subfamily. Homotetramer.

It is found in the cytoplasm. The enzyme catalyses (S)-malate = fumarate + H2O. It functions in the pathway carbohydrate metabolism; tricarboxylic acid cycle; (S)-malate from fumarate: step 1/1. In terms of biological role, involved in the TCA cycle. Catalyzes the stereospecific interconversion of fumarate to L-malate. This chain is Fumarate hydratase class II, found in Methanosarcina acetivorans (strain ATCC 35395 / DSM 2834 / JCM 12185 / C2A).